Reading from the N-terminus, the 692-residue chain is Putative ESX-1 scaffolding and assembly protein SaeA (692 aa).

Over residues 1–21 (MGERGELVSDLHPSDDHDADP) the composition is skewed to basic and acidic residues. Disordered regions lie at residues 1–23 (MGERGELVSDLHPSDDHDADPRL) and 87–134 (PAAP…TTGF). Residues 89–107 (APEPDPPPVPEPQPEPEPG) show a composition bias toward pro residues.

May be involved in assembly of the ESX-1 / type VII specialized secretion system (T7SS), which exports several proteins including EsxA and EsxB. Involved in DNA conjugation in recipient (MKD8) but not donor (mc(2)155) strain. This chain is Putative ESX-1 scaffolding and assembly protein SaeA (saeA), found in Mycolicibacterium smegmatis (strain MKD8) (Mycobacterium smegmatis).